The chain runs to 314 residues: MAIKRRKVSVIGAGFTGATTALMVAQKELGDVVLVDIPQMEGPTKGKALDMLESTPVQGVDVNITGTSSYEYTKDSDVVVITAGIARKPGMSRDDLVSTNAGIMKAVTKEVVKHSPNAYIIVLTNPADAMTYTVYKESGFPKNRVIGQSGVLDTARFRTFVAQELNLSVEDITGFVLGGHGDDMVPLIRYSYAGGIPLEKLLPQERIDAIVERTRKGGGEIVGLLGNGSAYYAPAASLAEMVEAILKDKKRVLPTIAYLEGEYGYEDIYVGVPTILGGDGIEKVIELDLTDEEKATFAKSIESVRNVMSALPKE.

NAD(+)-binding positions include 12–17 (GAGFTG) and Asp-36. The substrate site is built by Arg-87 and Arg-93. NAD(+)-binding positions include Asn-100 and 123 to 125 (LTN). Asn-125 contributes to the substrate binding site. Ser-149 carries the post-translational modification Phosphoserine. Position 156 (Arg-156) interacts with substrate. Residue His-180 is the Proton acceptor of the active site.

Belongs to the LDH/MDH superfamily. MDH type 3 family.

The enzyme catalyses (S)-malate + NAD(+) = oxaloacetate + NADH + H(+). Functionally, catalyzes the reversible oxidation of malate to oxaloacetate. This Halalkalibacterium halodurans (strain ATCC BAA-125 / DSM 18197 / FERM 7344 / JCM 9153 / C-125) (Bacillus halodurans) protein is Malate dehydrogenase.